A 186-amino-acid chain; its full sequence is NADH-quinone oxidoreductase subunit I (186 aa).

2 consecutive 4Fe-4S ferredoxin-type domains span residues 70-100 and 113-142; these read LTTRADGKVQCVSCNMCATVCPAYCIEIQSA and DRFEIDYSRCIFCGFCVEACPEDAIRMSKD. Residues Cys-80, Cys-83, Cys-86, Cys-90, Cys-122, Cys-125, Cys-128, and Cys-132 each contribute to the [4Fe-4S] cluster site.

It belongs to the complex I 23 kDa subunit family. In terms of assembly, NDH-1 is composed of 14 different subunits. Subunits NuoA, H, J, K, L, M, N constitute the membrane sector of the complex. Requires [4Fe-4S] cluster as cofactor.

Its subcellular location is the cell inner membrane. It carries out the reaction a quinone + NADH + 5 H(+)(in) = a quinol + NAD(+) + 4 H(+)(out). Functionally, NDH-1 shuttles electrons from NADH, via FMN and iron-sulfur (Fe-S) centers, to quinones in the respiratory chain. The immediate electron acceptor for the enzyme in this species is believed to be ubiquinone. Couples the redox reaction to proton translocation (for every two electrons transferred, four hydrogen ions are translocated across the cytoplasmic membrane), and thus conserves the redox energy in a proton gradient. This chain is NADH-quinone oxidoreductase subunit I, found in Pelobacter propionicus (strain DSM 2379 / NBRC 103807 / OttBd1).